The following is a 234-amino-acid chain: Glucosamine-6-phosphate deaminase (234 aa).

Aspartate 62 functions as the Proton acceptor; for enolization step in the catalytic mechanism. Asparagine 128 acts as the For ring-opening step in catalysis. Histidine 130 functions as the Proton acceptor; for ring-opening step in the catalytic mechanism. Glutamate 135 functions as the For ring-opening step in the catalytic mechanism.

Belongs to the glucosamine/galactosamine-6-phosphate isomerase family. NagB subfamily.

It catalyses the reaction alpha-D-glucosamine 6-phosphate + H2O = beta-D-fructose 6-phosphate + NH4(+). It participates in amino-sugar metabolism; N-acetylneuraminate degradation; D-fructose 6-phosphate from N-acetylneuraminate: step 5/5. In terms of biological role, catalyzes the reversible isomerization-deamination of glucosamine 6-phosphate (GlcN6P) to form fructose 6-phosphate (Fru6P) and ammonium ion. The chain is Glucosamine-6-phosphate deaminase from Streptococcus equi subsp. zooepidemicus (strain H70).